Reading from the N-terminus, the 686-residue chain is MNIESKIKEFTDQLNQFAYEYYTLDEPSVEDSEYDRLYHELVKLEQENPQLVRADSPTHWTGGVILDGFVKFRHPYNLYSLGDVFSREELALWEERVRKEIVNPEYICELKIDGLSLSLYYENGLLVTAATRGDGTTGENITENVKRIKDVPLKLKEAIDIVVRGEAYLPRQNFAKLNAERELAGAAPFANPRNAAAGTLRQLDTKIVAKRGLATFLYQEASPATNDTQEEVLEYFEELGFQVNPERKFARNLDEIWEFIEEATRLRDELPYDIDGVVIKVNNLAEQEELGFTVKAPRWAIAYKFPAEQAETEILSVDWTVGRTGVVTPTANMTPVLLAQTTVARATLHNVDYIQEKDIRNHDKVMIYKAGDIIPKVGKVLLEKRKPAKHLRKTHRANKYVWTRFGRRSVEKGLVFSKREDNRVKIPTQCPECDSDLIHFEDEVALRCVNPLCPAQIREKLIHFASRDAMNIVGLGPSVISQLFDKKLVTDVADLYQLTVEDLLTLDKVKETLAQKIVSAIAQSRENSAEKLLFGLGIRHVGGKAAKLLLERFANLRALSQASEEEISEIPSLGGVIATAVVSYFETAGAKTLLDELENAGLNFAYLGAVNVEGILSGKTVVLTGKLTTLKRKEAKEKLEALGANVSGSVSKKTDLVVAGEEAGSKLTKAQDLGIEIWSEQDLLDL.

NAD(+) is bound by residues 31–35, 80–81, and E109; these read DSEYD and SL. The N6-AMP-lysine intermediate role is filled by K111. NAD(+) is bound by residues R132, E166, K280, and K304. Zn(2+) contacts are provided by C430, C433, C448, and C453. Positions 611-686 constitute a BRCT domain; sequence NVEGILSGKT…IWSEQDLLDL (76 aa).

This sequence belongs to the NAD-dependent DNA ligase family. LigA subfamily. Mg(2+) is required as a cofactor. It depends on Mn(2+) as a cofactor.

It catalyses the reaction NAD(+) + (deoxyribonucleotide)n-3'-hydroxyl + 5'-phospho-(deoxyribonucleotide)m = (deoxyribonucleotide)n+m + AMP + beta-nicotinamide D-nucleotide.. Functionally, DNA ligase that catalyzes the formation of phosphodiester linkages between 5'-phosphoryl and 3'-hydroxyl groups in double-stranded DNA using NAD as a coenzyme and as the energy source for the reaction. It is essential for DNA replication and repair of damaged DNA. The chain is DNA ligase from Lactococcus lactis subsp. cremoris (strain SK11).